A 625-amino-acid polypeptide reads, in one-letter code: tRNA-guanine(15) transglycosylase (625 aa).

Asp-86 (nucleophile) is an active-site residue. Residues Asp-121 and Gly-184 each coordinate substrate. The region spanning 546 to 621 (GLRVVVDDES…VAVKVHEGVN (76 aa)) is the PUA domain.

Belongs to the archaeosine tRNA-ribosyltransferase family. Zn(2+) serves as cofactor.

It carries out the reaction guanosine(15) in tRNA + 7-cyano-7-deazaguanine = 7-cyano-7-carbaguanosine(15) in tRNA + guanine. The protein operates within tRNA modification; archaeosine-tRNA biosynthesis. Exchanges the guanine residue with 7-cyano-7-deazaguanine (preQ0) at position 15 in the dihydrouridine loop (D-loop) of archaeal tRNAs. This is tRNA-guanine(15) transglycosylase from Picrophilus torridus (strain ATCC 700027 / DSM 9790 / JCM 10055 / NBRC 100828 / KAW 2/3).